Here is an 84-residue protein sequence, read N- to C-terminus: uncharacterized protein (84 aa).

The segment covering 1-14 has biased composition (low complexity); the sequence is MQKLNKSSSKGKNN. Positions 1–84 are disordered; sequence MQKLNKSSSK…VDKGERKESE (84 aa). Positions 28–40 are enriched in gly residues; the sequence is STYGFGPYGGGGF. Basic and acidic residues-rich tracts occupy residues 53-65 and 73-84; these read DTKKLKGEVEEGT and KLVDKGERKESE.

This is an uncharacterized protein from Schizosaccharomyces pombe (strain 972 / ATCC 24843) (Fission yeast).